Reading from the N-terminus, the 496-residue chain is Cytochrome P450 71D180 (496 aa).

A helical; Signal-anchor for type II membrane protein membrane pass occupies residues 1–21; it reads MDISISWVVIIVFVLSYLILM. C435 is a binding site for heme.

Belongs to the cytochrome P450 family. Heme serves as cofactor. Mostly expressed in flowers and, to a lower extent, in leaves, especially in glandular trichomes.

The protein resides in the membrane. It catalyses the reaction (4R)-limonene + reduced [NADPH--hemoprotein reductase] + O2 = (1R,5S)-carveol + oxidized [NADPH--hemoprotein reductase] + H2O + H(+). The catalysed reaction is (4S)-limonene + reduced [NADPH--hemoprotein reductase] + O2 = (1S,5R)-carveol + oxidized [NADPH--hemoprotein reductase] + H2O + H(+). It carries out the reaction gamma-terpinene + 2 reduced [NADPH--hemoprotein reductase] + 2 O2 = carvacrol + 2 oxidized [NADPH--hemoprotein reductase] + 3 H2O + 2 H(+). The protein operates within secondary metabolite biosynthesis; terpenoid biosynthesis. Functionally, involved in the biosynthesis of phenolic monoterpenes natural products thymol and carvacrol which have a broad range of biological activities acting as antimicrobial compounds, insecticides, antioxidants and pharmaceutical agents. Catalyzes the C2-hydroxylation of gamma-terpinene to produce carvacrol. Mediates also the C6-hydroxylation of (4S)-limonene and (4R)-limonene to form carveol. The polypeptide is Cytochrome P450 71D180 (Thymus vulgaris (Thyme)).